The following is a 300-amino-acid chain: NADH-cytochrome b5 reductase 1 (300 aa).

The chain crosses the membrane as a helical span at residues 8-28; that stretch reads PLVVFATVATIIISFVTLYFF. Residues 34–45 show a composition bias toward low complexity; the sequence is SSTTSSSSSSSS. The disordered stretch occupies residues 34-54; sequence SSTTSSSSSSSSKSKKGSPAL. The region spanning 57 to 160 is the FAD-binding FR-type domain; sequence DKFQKFPLIS…RGPKGFFTYT (104 aa). FAD contacts are provided by residues 140 to 155 and 166 to 198; these read AEKQ…GPKG and SLGL…KVHL.

The protein belongs to the flavoprotein pyridine nucleotide cytochrome reductase family. Monomer. Component of the 2-(3-amino-3-carboxypropyl)histidine synthase complex composed of DPH1, DPH2, DPH3 and a NADH-dependent reductase, predominantly CBR1. The cofactor is FAD.

Its subcellular location is the mitochondrion outer membrane. It catalyses the reaction 2 Fe(III)-[cytochrome b5] + NADH = 2 Fe(II)-[cytochrome b5] + NAD(+) + H(+). It carries out the reaction 2 Fe(3+)-[Dph3] + NADH = 2 Fe(2+)-[Dph3] + NAD(+) + H(+). Its pathway is protein modification; peptidyl-diphthamide biosynthesis. Functionally, NADH-dependent reductase for DPH3 and cytochrome b5. Required for the first step of diphthamide biosynthesis, a post-translational modification of histidine which occurs in elongation factor 2. DPH1 and DPH2 transfer a 3-amino-3-carboxypropyl (ACP) group from S-adenosyl-L-methionine (SAM) to a histidine residue, the reaction is assisted by a reduction system comprising DPH3 and a NADH-dependent reductase, predominantly CBR1. By reducing DPH3, also involved in the formation of the tRNA wobble base modification mcm5s 2U (5-methoxycarbonylmethyl-2-thiouridine), mediated by the elongator complex. The cytochrome b5/NADH cytochrome b5 reductase electron transfer system supports the catalytic activity of several sterol biosynthetic enzymes. The protein is NADH-cytochrome b5 reductase 1 (CBR1) of Lodderomyces elongisporus (strain ATCC 11503 / CBS 2605 / JCM 1781 / NBRC 1676 / NRRL YB-4239) (Yeast).